Here is a 227-residue protein sequence, read N- to C-terminus: Type II restriction enzyme HhaII (227 aa).

As to quaternary structure, homodimer.

It catalyses the reaction Endonucleolytic cleavage of DNA to give specific double-stranded fragments with terminal 5'-phosphates.. A P subtype restriction enzyme that recognizes the double-stranded sequence 5'-GANTC-3' and cleaves after G-1. In Haemophilus parahaemolyticus, this protein is Type II restriction enzyme HhaII (hhaIIR).